A 365-amino-acid polypeptide reads, in one-letter code: Peptide chain release factor 2 (365 aa).

N5-methylglutamine is present on Q252.

The protein belongs to the prokaryotic/mitochondrial release factor family. Methylated by PrmC. Methylation increases the termination efficiency of RF2.

The protein resides in the cytoplasm. Peptide chain release factor 2 directs the termination of translation in response to the peptide chain termination codons UGA and UAA. This chain is Peptide chain release factor 2, found in Aliivibrio fischeri (strain ATCC 700601 / ES114) (Vibrio fischeri).